The primary structure comprises 308 residues: 3'(2'),5'-bisphosphate nucleotidase 1 (308 aa).

A2 bears the N-acetylalanine mark. The active-site Proton acceptor is D51. Residues E74, D117, V119, and D120 each contribute to the Mg(2+) site. T122 functions as the Proton acceptor in the catalytic mechanism. At T122 the chain carries Phosphothreonine. The AMP site is built by T195, H198, G220, and K224. At S240 the chain carries Phosphoserine. The residue at position 244 (K244) is an N6-succinyllysine. Mg(2+) is bound at residue D247.

Belongs to the inositol monophosphatase superfamily. It depends on Mg(2+) as a cofactor. Highly expressed in heart, brain, spleen, lung, liver, skeletal muscle, kidney and testis.

It catalyses the reaction adenosine 3',5'-bisphosphate + H2O = AMP + phosphate. The enzyme catalyses adenosine 2',5'-bisphosphate + H2O = AMP + phosphate. It carries out the reaction 3'-phosphoadenylyl sulfate + H2O = adenosine 5'-phosphosulfate + phosphate. The catalysed reaction is 1D-myo-inositol 1,4-bisphosphate + H2O = 1D-myo-inositol 4-phosphate + phosphate. It catalyses the reaction 1D-myo-inositol 1,3,4-trisphosphate + H2O = 1D-myo-inositol 3,4-bisphosphate + phosphate. Inhibited by Li(+) and Ca(2+), but not by Na(+). Phosphatase that converts 3'(2')-phosphoadenosine 5'-phosphate (PAP) to AMP and adenosine 3'-phosphate 5'-phosphosulfate (PAPS) to adenosine 5'-phosphosulfate (APS). Is also able to hydrolyze inositol 1,4-bisphosphate (Ins(1,4)P2) and inositol 1,3,4-trisphosphate (Ins(1,3,4)P3), but is not active on AMP, 3'-AMP, fructose-1,6-bisphosphate, Ins(1)P, Ins(2)P and Ins(1,4,5)P3. Probably prevents the toxic accumulation of PAP, a compound which inhibits a variety of proteins, including PAPS-utilizing enzymes such as sulfotransferases, and RNA processing enzymes. Could also play a role in inositol recycling and phosphoinositide metabolism. In Rattus norvegicus (Rat), this protein is 3'(2'),5'-bisphosphate nucleotidase 1 (Bpnt1).